Consider the following 354-residue polypeptide: Protein RecA (354 aa).

An ATP-binding site is contributed by 68–75 (GPESSGKT).

It belongs to the RecA family.

It is found in the cytoplasm. Functionally, can catalyze the hydrolysis of ATP in the presence of single-stranded DNA, the ATP-dependent uptake of single-stranded DNA by duplex DNA, and the ATP-dependent hybridization of homologous single-stranded DNAs. It interacts with LexA causing its activation and leading to its autocatalytic cleavage. The chain is Protein RecA from Synechocystis sp. (strain ATCC 27184 / PCC 6803 / Kazusa).